The chain runs to 204 residues: MKKLLVACCVVSGMMSASVLASPSSDLQGRLNKVNSFHASFTQTVSTADGTPVQQGEGELWVKRPNLFNWHMISPDESVLVSDGKTLWFYNPFVEQVTATWLNRATGNTPFMLITRNDASDWAQYNVTQQGNTFDLVPKSAKNNLKKFTISVMPDGTINGFSAVEQDGQRSVYTLKRQQNGAVDAAKFRFTPPPGVTLDDQRQQ.

A signal peptide spans 1–21 (MKKLLVACCVVSGMMSASVLA).

This sequence belongs to the LolA family. As to quaternary structure, monomer.

It localises to the periplasm. Functionally, participates in the translocation of lipoproteins from the inner membrane to the outer membrane. Only forms a complex with a lipoprotein if the residue after the N-terminal Cys is not an aspartate (The Asp acts as a targeting signal to indicate that the lipoprotein should stay in the inner membrane). The sequence is that of Outer-membrane lipoprotein carrier protein from Edwardsiella ictaluri (strain 93-146).